A 435-amino-acid polypeptide reads, in one-letter code: Serine--tRNA ligase (435 aa).

237-239 (TAE) serves as a coordination point for L-serine. 268 to 270 (RSE) lines the ATP pocket. Glu291 is a binding site for L-serine. 355–358 (EISS) is an ATP binding site. An L-serine-binding site is contributed by Ser390.

The protein belongs to the class-II aminoacyl-tRNA synthetase family. Type-1 seryl-tRNA synthetase subfamily. In terms of assembly, homodimer. The tRNA molecule binds across the dimer.

Its subcellular location is the cytoplasm. The enzyme catalyses tRNA(Ser) + L-serine + ATP = L-seryl-tRNA(Ser) + AMP + diphosphate + H(+). It carries out the reaction tRNA(Sec) + L-serine + ATP = L-seryl-tRNA(Sec) + AMP + diphosphate + H(+). Its pathway is aminoacyl-tRNA biosynthesis; selenocysteinyl-tRNA(Sec) biosynthesis; L-seryl-tRNA(Sec) from L-serine and tRNA(Sec): step 1/1. Catalyzes the attachment of serine to tRNA(Ser). Is also able to aminoacylate tRNA(Sec) with serine, to form the misacylated tRNA L-seryl-tRNA(Sec), which will be further converted into selenocysteinyl-tRNA(Sec). This chain is Serine--tRNA ligase, found in Lactobacillus acidophilus (strain ATCC 700396 / NCK56 / N2 / NCFM).